A 364-amino-acid polypeptide reads, in one-letter code: Cobalt-precorrin-5B C(1)-methyltransferase (364 aa).

Belongs to the CbiD family.

It catalyses the reaction Co-precorrin-5B + S-adenosyl-L-methionine = Co-precorrin-6A + S-adenosyl-L-homocysteine. Its pathway is cofactor biosynthesis; adenosylcobalamin biosynthesis; cob(II)yrinate a,c-diamide from sirohydrochlorin (anaerobic route): step 6/10. Catalyzes the methylation of C-1 in cobalt-precorrin-5B to form cobalt-precorrin-6A. The protein is Cobalt-precorrin-5B C(1)-methyltransferase of Pseudomonas putida (strain W619).